A 509-amino-acid chain; its full sequence is Cytochrome P450 monooxygenase CYP512U6 (509 aa).

Residues 12-29 (VFACVAVVIAIYAVRWYT) traverse the membrane as a helical segment. Position 446 (Cys-446) interacts with heme.

Belongs to the cytochrome P450 family. Requires heme as cofactor.

It is found in the membrane. It catalyses the reaction ganoderate DM + reduced [NADPH--hemoprotein reductase] + O2 = hainanate A + oxidized [NADPH--hemoprotein reductase] + H2O + H(+). The enzyme catalyses ganoderate TR + reduced [NADPH--hemoprotein reductase] + O2 = ganoderate Jc + oxidized [NADPH--hemoprotein reductase] + H2O + H(+). It participates in secondary metabolite biosynthesis; terpenoid biosynthesis. Its function is as follows. Cytochrome P450 monooxygenase that hydroxylates the ganoderic acids DM and TR at the C-23 position to produce hainanic acid A and ganoderic acid Jc, respectively. The chain is Cytochrome P450 monooxygenase CYP512U6 from Ganoderma lucidum (Ling zhi medicinal fungus).